A 147-amino-acid polypeptide reads, in one-letter code: Large ribosomal subunit protein uL15 (147 aa).

Residues 1–62 form a disordered region; the sequence is MDLSNLRPAI…GQMPLQRRLP (62 aa). Gly residues-rich tracts occupy residues 21–31 and 42–52; these read RGPGSGNGKTA and SGGGVKPGFEG.

The protein belongs to the universal ribosomal protein uL15 family. In terms of assembly, part of the 50S ribosomal subunit.

Functionally, binds to the 23S rRNA. The chain is Large ribosomal subunit protein uL15 from Syntrophotalea carbinolica (strain DSM 2380 / NBRC 103641 / GraBd1) (Pelobacter carbinolicus).